The chain runs to 347 residues: NADH-ubiquinone oxidoreductase chain 2 (347 aa).

The next 11 membrane-spanning stretches (helical) occupy residues 3 to 23, 25 to 45, 59 to 79, 96 to 116, 122 to 142, 149 to 169, 178 to 198, 200 to 220, 240 to 260, 274 to 294, and 326 to 346; these read PMTS…VLMS, HWFM…PILM, YFLT…INLM, TLIT…FWVP, VSLS…LSLL, INTN…GWGG, IMAY…IYNP, LSLL…MLLI, ITTM…LTGF, NSVI…FFYM, and MTML…FISL.

This sequence belongs to the complex I subunit 2 family. Core subunit of respiratory chain NADH dehydrogenase (Complex I) which is composed of 45 different subunits. Interacts with TMEM242.

Its subcellular location is the mitochondrion inner membrane. It carries out the reaction a ubiquinone + NADH + 5 H(+)(in) = a ubiquinol + NAD(+) + 4 H(+)(out). Functionally, core subunit of the mitochondrial membrane respiratory chain NADH dehydrogenase (Complex I) which catalyzes electron transfer from NADH through the respiratory chain, using ubiquinone as an electron acceptor. Essential for the catalytic activity and assembly of complex I. This is NADH-ubiquinone oxidoreductase chain 2 from Sylvisorex granti (Grant's forest shrew).